Reading from the N-terminus, the 175-residue chain is Adenine phosphoribosyltransferase (175 aa).

The protein belongs to the purine/pyrimidine phosphoribosyltransferase family. Homodimer.

It localises to the cytoplasm. It carries out the reaction AMP + diphosphate = 5-phospho-alpha-D-ribose 1-diphosphate + adenine. It participates in purine metabolism; AMP biosynthesis via salvage pathway; AMP from adenine: step 1/1. In terms of biological role, catalyzes a salvage reaction resulting in the formation of AMP, that is energically less costly than de novo synthesis. This Nitrosospira multiformis (strain ATCC 25196 / NCIMB 11849 / C 71) protein is Adenine phosphoribosyltransferase.